Consider the following 338-residue polypeptide: Holliday junction branch migration complex subunit RuvB (338 aa).

A large ATPase domain (RuvB-L) region spans residues 4–185; that stretch reads EDQKILDAKP…FGIVAHMQFY (182 aa). ATP contacts are provided by residues Leu-24, Arg-25, Gly-66, Lys-69, Thr-70, Thr-71, 132-134, Arg-175, Tyr-185, and Arg-222; that span reads EDF. Residue Thr-70 participates in Mg(2+) binding. A small ATPAse domain (RuvB-S) region spans residues 186–256; that stretch reads PVSDLKLIAK…IVDNALNKLH (71 aa). Residues 259-338 are head domain (RuvB-H); the sequence is ARGLDETDLK…LQIPYQTGLS (80 aa). The DNA site is built by Arg-314 and Arg-319.

The protein belongs to the RuvB family. In terms of assembly, homohexamer. Forms an RuvA(8)-RuvB(12)-Holliday junction (HJ) complex. HJ DNA is sandwiched between 2 RuvA tetramers; dsDNA enters through RuvA and exits via RuvB. An RuvB hexamer assembles on each DNA strand where it exits the tetramer. Each RuvB hexamer is contacted by two RuvA subunits (via domain III) on 2 adjacent RuvB subunits; this complex drives branch migration. In the full resolvosome a probable DNA-RuvA(4)-RuvB(12)-RuvC(2) complex forms which resolves the HJ.

The protein resides in the cytoplasm. It carries out the reaction ATP + H2O = ADP + phosphate + H(+). Functionally, the RuvA-RuvB-RuvC complex processes Holliday junction (HJ) DNA during genetic recombination and DNA repair, while the RuvA-RuvB complex plays an important role in the rescue of blocked DNA replication forks via replication fork reversal (RFR). RuvA specifically binds to HJ cruciform DNA, conferring on it an open structure. The RuvB hexamer acts as an ATP-dependent pump, pulling dsDNA into and through the RuvAB complex. RuvB forms 2 homohexamers on either side of HJ DNA bound by 1 or 2 RuvA tetramers; 4 subunits per hexamer contact DNA at a time. Coordinated motions by a converter formed by DNA-disengaged RuvB subunits stimulates ATP hydrolysis and nucleotide exchange. Immobilization of the converter enables RuvB to convert the ATP-contained energy into a lever motion, pulling 2 nucleotides of DNA out of the RuvA tetramer per ATP hydrolyzed, thus driving DNA branch migration. The RuvB motors rotate together with the DNA substrate, which together with the progressing nucleotide cycle form the mechanistic basis for DNA recombination by continuous HJ branch migration. Branch migration allows RuvC to scan DNA until it finds its consensus sequence, where it cleaves and resolves cruciform DNA. This Oenococcus oeni (strain ATCC BAA-331 / PSU-1) protein is Holliday junction branch migration complex subunit RuvB.